The primary structure comprises 376 residues: Chaperone protein DnaJ (376 aa).

The region spanning 5-70 (DYYETLGVQK…EKRAAYDQYG (66 aa)) is the J domain. The CR-type zinc finger occupies 133–211 (GTTKDIKINT…CHGDGRVHKK (79 aa)). Residues C146, C149, C163, C166, C185, C188, C199, and C202 each contribute to the Zn(2+) site. 4 CXXCXGXG motif repeats span residues 146-153 (CDHCDGSG), 163-170 (CPTCHGHG), 185-192 (CPTCQGSG), and 199-206 (CKHCHGDG).

The protein belongs to the DnaJ family. Homodimer. Requires Zn(2+) as cofactor.

It localises to the cytoplasm. Participates actively in the response to hyperosmotic and heat shock by preventing the aggregation of stress-denatured proteins and by disaggregating proteins, also in an autonomous, DnaK-independent fashion. Unfolded proteins bind initially to DnaJ; upon interaction with the DnaJ-bound protein, DnaK hydrolyzes its bound ATP, resulting in the formation of a stable complex. GrpE releases ADP from DnaK; ATP binding to DnaK triggers the release of the substrate protein, thus completing the reaction cycle. Several rounds of ATP-dependent interactions between DnaJ, DnaK and GrpE are required for fully efficient folding. Also involved, together with DnaK and GrpE, in the DNA replication of plasmids through activation of initiation proteins. The polypeptide is Chaperone protein DnaJ (Mannheimia succiniciproducens (strain KCTC 0769BP / MBEL55E)).